Consider the following 396-residue polypeptide: 1-deoxy-D-xylulose 5-phosphate reductoisomerase (396 aa).

Residues Thr10, Gly11, Ser12, Ile13, Gln38, and Asn124 each contribute to the NADPH site. Position 125 (Lys125) interacts with 1-deoxy-D-xylulose 5-phosphate. Glu126 is a binding site for NADPH. Asp150 serves as a coordination point for Mn(2+). Residues Ser151, Glu152, Ser179, and His202 each coordinate 1-deoxy-D-xylulose 5-phosphate. Glu152 is a binding site for Mn(2+). Gly208 provides a ligand contact to NADPH. The 1-deoxy-D-xylulose 5-phosphate site is built by Ser215, Asn220, Lys221, and Glu224. Glu224 contacts Mn(2+).

The protein belongs to the DXR family. The cofactor is Mg(2+). Mn(2+) is required as a cofactor.

The enzyme catalyses 2-C-methyl-D-erythritol 4-phosphate + NADP(+) = 1-deoxy-D-xylulose 5-phosphate + NADPH + H(+). It functions in the pathway isoprenoid biosynthesis; isopentenyl diphosphate biosynthesis via DXP pathway; isopentenyl diphosphate from 1-deoxy-D-xylulose 5-phosphate: step 1/6. Its function is as follows. Catalyzes the NADPH-dependent rearrangement and reduction of 1-deoxy-D-xylulose-5-phosphate (DXP) to 2-C-methyl-D-erythritol 4-phosphate (MEP). This Ralstonia pickettii (strain 12J) protein is 1-deoxy-D-xylulose 5-phosphate reductoisomerase.